The sequence spans 357 residues: Aspartate-semialdehyde dehydrogenase (357 aa).

8 residues coordinate NADP(+): Thr12, Gly13, Thr14, Val15, Ser37, Ser40, Leu84, and Asp85. The Acyl-thioester intermediate role is filled by Cys151. Gly183 is an NADP(+) binding site. The Proton acceptor role is filled by His247. The residue at position 323 (Ser323) is a Phosphoserine. NADP(+) is bound at residue Asn335.

Belongs to the aspartate-semialdehyde dehydrogenase family.

The protein localises to the cytoplasm. Its subcellular location is the cytosol. It is found in the nucleus. It carries out the reaction L-aspartate 4-semialdehyde + phosphate + NADP(+) = 4-phospho-L-aspartate + NADPH + H(+). It participates in amino-acid biosynthesis; L-methionine biosynthesis via de novo pathway; L-homoserine from L-aspartate: step 2/3. Its pathway is amino-acid biosynthesis; L-threonine biosynthesis; L-threonine from L-aspartate: step 2/5. In terms of biological role, catalyzes the NADPH-dependent formation of L-aspartate 4-semialdehyde (L-ASA) by the reductive dephosphorylation of 4-phospho-L-aspartate. Mediates the second step in the biosynthesis of amino acids that derive from aspartate (the aspartate family of amino acids), including methioinine and threonine, the latter of which is a precursor to isoleucine. The polypeptide is Aspartate-semialdehyde dehydrogenase (Schizosaccharomyces pombe (strain 972 / ATCC 24843) (Fission yeast)).